The primary structure comprises 120 residues: Cytochrome c oxidase subunit 5 (120 aa).

Serine 2 carries the blocked amino end (Ser) modification. Residues cysteine 76, histidine 84, cysteine 99, and cysteine 102 each contribute to the Zn(2+) site.

The protein belongs to the cytochrome c oxidase subunit 5B family. In terms of assembly, component of the cytochrome c oxidase (complex IV, CIV), a multisubunit enzyme composed of a catalytic core of 3 subunits and several supernumerary subunits. The complex exists as a monomer or a dimer and forms supercomplexes (SCs) in the inner mitochondrial membrane with ubiquinol-cytochrome c oxidoreductase (cytochrome b-c1 complex, complex III, CIII). Slime mold cytochrome c oxidase consists of at least seven different polypeptides species, subunits I, II, III, IV, V, VI, and VIIe/s in order of MW.

It localises to the mitochondrion inner membrane. Its pathway is energy metabolism; oxidative phosphorylation. Functionally, component of the cytochrome c oxidase, the last enzyme in the mitochondrial electron transport chain which drives oxidative phosphorylation. The respiratory chain contains 3 multisubunit complexes succinate dehydrogenase (complex II, CII), ubiquinol-cytochrome c oxidoreductase (cytochrome b-c1 complex, complex III, CIII) and cytochrome c oxidase (complex IV, CIV), that cooperate to transfer electrons derived from NADH and succinate to molecular oxygen, creating an electrochemical gradient over the inner membrane that drives transmembrane transport and the ATP synthase. Cytochrome c oxidase is the component of the respiratory chain that catalyzes the reduction of oxygen to water. Electrons originating from reduced cytochrome c in the intermembrane space (IMS) are transferred via the dinuclear copper A center (CU(A)) of subunit 2 and heme A of subunit 1 to the active site in subunit 1, a binuclear center (BNC) formed by heme A3 and copper B (CU(B)). The BNC reduces molecular oxygen to 2 water molecules using 4 electrons from cytochrome c in the IMS and 4 protons from the mitochondrial matrix. The protein is Cytochrome c oxidase subunit 5 (cxeA) of Dictyostelium discoideum (Social amoeba).